The sequence spans 388 residues: Succinate--CoA ligase [ADP-forming] subunit beta (388 aa).

Positions 9 to 244 (KEILRKFGVA…LDEEDPAEIE (236 aa)) constitute an ATP-grasp domain. Residues K46, 53–55 (GRG), E99, A102, and E107 contribute to the ATP site. 2 residues coordinate Mg(2+): N199 and D213. Substrate is bound by residues N264 and 321–323 (GIM).

The protein belongs to the succinate/malate CoA ligase beta subunit family. Heterotetramer of two alpha and two beta subunits. Mg(2+) serves as cofactor.

It carries out the reaction succinate + ATP + CoA = succinyl-CoA + ADP + phosphate. It catalyses the reaction GTP + succinate + CoA = succinyl-CoA + GDP + phosphate. The protein operates within carbohydrate metabolism; tricarboxylic acid cycle; succinate from succinyl-CoA (ligase route): step 1/1. In terms of biological role, succinyl-CoA synthetase functions in the citric acid cycle (TCA), coupling the hydrolysis of succinyl-CoA to the synthesis of either ATP or GTP and thus represents the only step of substrate-level phosphorylation in the TCA. The beta subunit provides nucleotide specificity of the enzyme and binds the substrate succinate, while the binding sites for coenzyme A and phosphate are found in the alpha subunit. The polypeptide is Succinate--CoA ligase [ADP-forming] subunit beta (Burkholderia lata (strain ATCC 17760 / DSM 23089 / LMG 22485 / NCIMB 9086 / R18194 / 383)).